We begin with the raw amino-acid sequence, 904 residues long: Dynamin-like protein C (904 aa).

The stretch at 44–102 (IAEAMALKMHEEEKKKREEKKRKRDNEELLSKQVRTKLENERKKLDDSESINASTNQEL) forms a coiled coil. The interval 53–93 (HEEEKKKREEKKRKRDNEELLSKQVRTKLENERKKLDDSES) is disordered. Residues 67–90 (RDNEELLSKQVRTKLENERKKLDD) show a composition bias toward basic and acidic residues. The Dynamin-type G domain maps to 119 to 441 (SFDTPELVVV…HEKYQQNLLP (323 aa)). The G1 motif stretch occupies residues 129 to 136 (GMQSDGKS). 129 to 136 (GMQSDGKS) is a GTP binding site. The G2 motif stretch occupies residues 155–157 (GTR). Positions 169–227 (SKQQPSCRFKKEDYSNSYGGSSSSTSTTSGNSNHNTDKQQNVSSSQGGGGGSNNLNEDK) are disordered. Positions 183–213 (SNSYGGSSSSTSTTSGNSNHNTDKQQNVSSS) are enriched in low complexity. Positions 278 to 281 (DTPG) are G3 motif. Residues 278 to 282 (DTPGF) and 343 to 346 (TKFD) contribute to the GTP site. Residues 343-346 (TKFD) form a G4 motif region. The tract at residues 378–381 (LPLK) is G5 motif. Positions 781–811 (EMFQLGLKELENKLHKLEFQLIDCKKNRDKF) form a coiled coil. Disordered regions lie at residues 821–840 (SLNQ…ASSS) and 853–904 (NGKF…FDQN). Polar residues predominate over residues 853–876 (NGKFSTPDKNSLTMSPFTSPFTQS). The segment covering 877 to 891 (NYHQHNNNNYQINQQ) has biased composition (low complexity).

This sequence belongs to the TRAFAC class dynamin-like GTPase superfamily. Dynamin/Fzo/YdjA family.

The protein localises to the cytoplasm. It catalyses the reaction GTP + H2O = GDP + phosphate + H(+). Functionally, involved in cytokinesis. May hydrolyze GTP. This chain is Dynamin-like protein C (dlpC), found in Dictyostelium discoideum (Social amoeba).